Consider the following 99-residue polypeptide: Malonate decarboxylase acyl carrier protein (99 aa).

Position 25 is an O-(phosphoribosyl dephospho-coenzyme A)serine (serine 25).

Belongs to the MdcC family. In terms of processing, covalently binds the prosthetic group of malonate decarboxylase.

Its subcellular location is the cytoplasm. In terms of biological role, subunit of malonate decarboxylase, it is an acyl carrier protein to which acetyl and malonyl thioester residues are bound via a 2'-(5''-phosphoribosyl)-3'-dephospho-CoA prosthetic group and turn over during the catalytic mechanism. This is Malonate decarboxylase acyl carrier protein from Pseudomonas fluorescens (strain Pf0-1).